Here is a 163-residue protein sequence, read N- to C-terminus: UPF0262 protein RPC_4416 (163 aa).

It belongs to the UPF0262 family.

The polypeptide is UPF0262 protein RPC_4416 (Rhodopseudomonas palustris (strain BisB18)).